Reading from the N-terminus, the 207-residue chain is Cyclin-dependent kinase 2-interacting protein (207 aa).

Residues 78–99 (TDKVELDRLCSELLQTIENMEK) are a coiled coil.

The protein belongs to the CINP family. As to quaternary structure, homodimer. Part of the 55LCC heterohexameric ATPase complex.

It localises to the nucleus. Component of the DNA replication complex, which interacts with two kinases, CDK2 and CDC7, thereby providing a functional and physical link between CDK2 and CDC7 during firing of the origins of replication. Regulates ATR-mediated checkpoint signaling in response to DNA damage. Part of the 55LCC heterohexameric ATPase complex which is chromatin-associated and promotes replisome proteostasis to maintain replication fork progression and genome stability. Required for replication fork progression, sister chromatid cohesion, and chromosome stability. The ATPase activity is specifically enhanced by replication fork DNA and is coupled to cysteine protease-dependent cleavage of replisome substrates in response to replication fork damage. Uses ATPase activity to process replisome substrates in S-phase, facilitating their proteolytic turnover from chromatin to ensure DNA replication and mitotic fidelity. As part of 55LCC complex, also involved in the cytoplasmic maturation steps of pre-60S ribosomal particles by promoting the release of shuttling protein RSL24D1/RLP24 from the pre-ribosomal particles. In Xenopus laevis (African clawed frog), this protein is Cyclin-dependent kinase 2-interacting protein (cinp).